Here is a 206-residue protein sequence, read N- to C-terminus: Charged multivesicular body protein 6 (206 aa).

Glycine 2 carries N-myristoyl glycine lipidation. Residues 11 to 103 are a coiled coil; sequence TRVTEQDRAV…AQIEMKVIEG (93 aa). Residues 167–206 form a disordered region; the sequence is EADLELPEVPGEELPEVPEQEPVREKERVKKKPEREMVAV. Residues 168 to 185 show a composition bias toward acidic residues; the sequence is ADLELPEVPGEELPEVPE. Positions 170-181 match the Type-2 MIT-interacting motif motif; the sequence is LELPEVPGEELP. Residues 187 to 206 show a composition bias toward basic and acidic residues; sequence EPVREKERVKKKPEREMVAV.

It belongs to the SNF7 family. As to quaternary structure, probable core component of the endosomal sorting required for transport complex III (ESCRT-III). ESCRT-III components are thought to multimerize to form a flat lattice on the perimeter membrane of the endosome.

It is found in the endomembrane system. It localises to the late endosome membrane. Functionally, probable core component of the endosomal sorting required for transport complex III (ESCRT-III) which is involved in multivesicular bodies (MVBs) formation and sorting of endosomal cargo proteins into MVBs. MVBs contain intraluminal vesicles (ILVs) that are generated by invagination and scission from the limiting membrane of the endosome and mostly are delivered to lysosomes enabling degradation of membrane proteins, such as stimulated growth factor receptors, lysosomal enzymes and lipids. In the ESCRT-III complex, it probably serves as an acceptor for the ESCRT-II complex on endosomal membranes. The sequence is that of Charged multivesicular body protein 6 (chmp6) from Danio rerio (Zebrafish).